Reading from the N-terminus, the 276-residue chain is uncharacterized protein (276 aa).

The tract at residues 1 to 20 (MMSDEQHQGGDGQTTTNTNT) is disordered.

This is an uncharacterized protein from Dictyostelium discoideum (Social amoeba).